Reading from the N-terminus, the 105-residue chain is Urease subunit beta (105 aa).

Belongs to the urease beta subunit family. In terms of assembly, heterotrimer of UreA (gamma), UreB (beta) and UreC (alpha) subunits. Three heterotrimers associate to form the active enzyme.

It localises to the cytoplasm. It catalyses the reaction urea + 2 H2O + H(+) = hydrogencarbonate + 2 NH4(+). The protein operates within nitrogen metabolism; urea degradation; CO(2) and NH(3) from urea (urease route): step 1/1. The chain is Urease subunit beta from Pseudomonas entomophila (strain L48).